The chain runs to 158 residues: Transcription elongation factor GreA (158 aa).

Positions 4–70 (QKQYPMTQEG…IEQDIQRIEH (67 aa)) form a coiled coil.

The protein belongs to the GreA/GreB family.

In terms of biological role, necessary for efficient RNA polymerase transcription elongation past template-encoded arresting sites. The arresting sites in DNA have the property of trapping a certain fraction of elongating RNA polymerases that pass through, resulting in locked ternary complexes. Cleavage of the nascent transcript by cleavage factors such as GreA or GreB allows the resumption of elongation from the new 3'terminus. GreA releases sequences of 2 to 3 nucleotides. The polypeptide is Transcription elongation factor GreA (Staphylococcus aureus (strain Mu3 / ATCC 700698)).